We begin with the raw amino-acid sequence, 22 residues long: Myofibril-bound serine protease (22 aa).

The 22-residue stretch at 1 to 22 folds into the Peptidase S1 domain; it reads IVGGYECEAYSKPYQVSINLGY.

The protein belongs to the peptidase S1 family. In terms of tissue distribution, detected in skeletal muscle (at protein level).

Its subcellular location is the cytoplasm. Serine protease which degrades the myosin heavy chain and tropomyosin, but not actin. Selectively cleaves Arg-|-Xaa bonds. The polypeptide is Myofibril-bound serine protease (Saurida undosquamis (Brushtooth lizardfish)).